The sequence spans 197 residues: DNA-directed RNA polymerases I, II, and III subunit rpabc1 (197 aa).

Belongs to the archaeal Rpo5/eukaryotic RPB5 RNA polymerase subunit family. In terms of assembly, component of the RNA polymerase I (Pol I), RNA polymerase II (Pol II) and RNA polymerase III (Pol III) complexes consisting of at least 13, 12 and 17 subunits, respectively. In RNA Pol II, this subunit is present in 2-fold molar excess over the other subunits.

It is found in the nucleus. In terms of biological role, DNA-dependent RNA polymerase catalyzes the transcription of DNA into RNA using the four ribonucleoside triphosphates as substrates. Common component of RNA polymerases I, II and III which synthesize ribosomal RNA precursors, mRNA precursors and many functional non-coding RNAs, and small RNAs, such as 5S rRNA and tRNAs, respectively. Pol II is the central component of the basal RNA polymerase II transcription machinery. Pols are composed of mobile elements that move relative to each other. In Pol II, RPB5 is part of the lower jaw surrounding the central large cleft and thought to grab the incoming DNA template. Seems to be the major component in this process. The protein is DNA-directed RNA polymerases I, II, and III subunit rpabc1 (polr2e) of Dictyostelium discoideum (Social amoeba).